The sequence spans 274 residues: Large ribosomal subunit protein uL2 (274 aa).

A disordered region spans residues 223-274 (VAMNPVDHPHGGGEGRTSGGRHPVSPWGMPTKGFKTRKNKSTDKYIVRRRNK).

Belongs to the universal ribosomal protein uL2 family. Part of the 50S ribosomal subunit. Forms a bridge to the 30S subunit in the 70S ribosome.

Functionally, one of the primary rRNA binding proteins. Required for association of the 30S and 50S subunits to form the 70S ribosome, for tRNA binding and peptide bond formation. It has been suggested to have peptidyltransferase activity; this is somewhat controversial. Makes several contacts with the 16S rRNA in the 70S ribosome. This is Large ribosomal subunit protein uL2 from Aliivibrio salmonicida (strain LFI1238) (Vibrio salmonicida (strain LFI1238)).